The chain runs to 66 residues: Large ribosomal subunit protein uL29 (66 aa).

It belongs to the universal ribosomal protein uL29 family.

The protein is Large ribosomal subunit protein uL29 of Bacillus anthracis (strain CDC 684 / NRRL 3495).